We begin with the raw amino-acid sequence, 326 residues long: Protein ORF5 in retron Ec67 (326 aa).

A disordered region spans residues 1–24 (MGKSKKNRAAATNQLKHKSQTSAE). Residues 10–24 (AATNQLKHKSQTSAE) are compositionally biased toward polar residues.

Belongs to the phage portal family. PBSX subfamily.

The protein is Protein ORF5 in retron Ec67 of Escherichia coli.